Here is a 276-residue protein sequence, read N- to C-terminus: Cytoskeleton protein RodZ (276 aa).

The Cytoplasmic segment spans residues methionine 1–serine 110. The helical; Signal-anchor for type II membrane protein transmembrane segment at phenylalanine 111–tyrosine 131 threads the bilayer. Topologically, residues valine 132–asparagine 276 are extracellular.

This sequence belongs to the RodZ family. As to quaternary structure, interacts with MltG and MreC in the elongasome. Interacts with KhpB (also called EloR/Jag).

Its subcellular location is the cell membrane. In terms of biological role, cytoskeletal protein that is involved in cell-shape control through regulation of the length of the long axis. Probably part of the elongasome which synthesizes peripheral peptidoglycan. The polypeptide is Cytoskeleton protein RodZ (Streptococcus pneumoniae (strain ATCC BAA-255 / R6)).